Reading from the N-terminus, the 186-residue chain is Ribosome-recycling factor (186 aa).

This sequence belongs to the RRF family.

Its subcellular location is the cytoplasm. Its function is as follows. Responsible for the release of ribosomes from messenger RNA at the termination of protein biosynthesis. May increase the efficiency of translation by recycling ribosomes from one round of translation to another. The chain is Ribosome-recycling factor from Azorhizobium caulinodans (strain ATCC 43989 / DSM 5975 / JCM 20966 / LMG 6465 / NBRC 14845 / NCIMB 13405 / ORS 571).